The primary structure comprises 215 residues: Cytochrome b6 (215 aa).

A helical transmembrane segment spans residues 32-52 (IFYCLGGITFTCFLVQVATGF). Cys-35 serves as a coordination point for heme c. Positions 86 and 100 each coordinate heme b. The next 3 membrane-spanning stretches (helical) occupy residues 90 to 110 (ASMMVLMMILHVFRVWLTGGF), 116 to 136 (LTWTTGVIMAVCTVSFGVTGY), and 186 to 206 (LHTFVLPLLTAVFMLMHFLMI). Residues His-187 and His-202 each contribute to the heme b site.

The protein belongs to the cytochrome b family. PetB subfamily. As to quaternary structure, the 4 large subunits of the cytochrome b6-f complex are cytochrome b6, subunit IV (17 kDa polypeptide, PetD), cytochrome f and the Rieske protein, while the 4 small subunits are PetG, PetL, PetM and PetN. The complex functions as a dimer. It depends on heme b as a cofactor. The cofactor is heme c.

Its subcellular location is the plastid. It localises to the chloroplast thylakoid membrane. In terms of biological role, component of the cytochrome b6-f complex, which mediates electron transfer between photosystem II (PSII) and photosystem I (PSI), cyclic electron flow around PSI, and state transitions. This Stigeoclonium helveticum (Green alga) protein is Cytochrome b6.